Consider the following 78-residue polypeptide: MSRVCDLTGKRAMVGNNVSHAMNKTKRKFSVNLVKKRFYLPEEDRWITLRVAASTIKTINKNGITAVLKKAQSEGFIK.

Belongs to the bacterial ribosomal protein bL28 family.

The sequence is that of Large ribosomal subunit protein bL28 from Flavobacterium johnsoniae (strain ATCC 17061 / DSM 2064 / JCM 8514 / BCRC 14874 / CCUG 350202 / NBRC 14942 / NCIMB 11054 / UW101) (Cytophaga johnsonae).